Consider the following 408-residue polypeptide: Multidrug resistance protein MdtG (408 aa).

A run of 10 helical transmembrane segments spans residues 13-33, 51-71, 89-109, 112-132, 138-158, 170-190, 221-241, 253-273, 287-307, and 375-395; these read LYIAWLGCFFTGAAFSLVMPF, LWSGVVFSITFLFSAIASPFW, LGMAIVMALMGLVQNIWQFLL, AALGVLGGFVPNANALIAIQV, GWALGTLSTGAVGGALLGPLL, PVFFITAVVLFICFLVTFFFI, LFVTTLIIQVATGSVAPILTL, LAFISGAIAAIPGVSALLSAP, ILVAMLILSVLLLIPMAFVQS, and AVFLVTASVVMINAFYSWLSL.

The protein belongs to the major facilitator superfamily. DHA1 family. MdtG (TC 2.A.1.2.20) subfamily.

The protein localises to the cell inner membrane. The protein is Multidrug resistance protein MdtG of Dickeya zeae (strain Ech586) (Dickeya dadantii (strain Ech586)).